The primary structure comprises 255 residues: Cytosolic Fe-S cluster assembly factor Nubp2 homolog (255 aa).

14–21 (GKGGVGKS) is an ATP binding site. [4Fe-4S] cluster contacts are provided by C185 and C188.

This sequence belongs to the Mrp/NBP35 ATP-binding proteins family. NUBP2/CFD1 subfamily. Heterotetramer of 2 Nubp1 and 2 Nubp2 chains. The cofactor is [4Fe-4S] cluster.

The protein resides in the cytoplasm. Its function is as follows. Component of the cytosolic iron-sulfur (Fe/S) protein assembly (CIA) machinery. Required for maturation of extramitochondrial Fe-S proteins. The Nubp1-Nubp2 heterotetramer forms a Fe-S scaffold complex, mediating the de novo assembly of an Fe-S cluster and its transfer to target apoproteins. The protein is Cytosolic Fe-S cluster assembly factor Nubp2 homolog of Drosophila persimilis (Fruit fly).